Here is a 207-residue protein sequence, read N- to C-terminus: ATP synthase subunit b 2 (207 aa).

The chain crosses the membrane as a helical span at residues 58 to 78 (LLWLVITFGVFYLLMQKVIAP).

This sequence belongs to the ATPase B chain family. F-type ATPases have 2 components, F(1) - the catalytic core - and F(0) - the membrane proton channel. F(1) has five subunits: alpha(3), beta(3), gamma(1), delta(1), epsilon(1). F(0) has three main subunits: a(1), b(2) and c(10-14). The alpha and beta chains form an alternating ring which encloses part of the gamma chain. F(1) is attached to F(0) by a central stalk formed by the gamma and epsilon chains, while a peripheral stalk is formed by the delta and b chains.

It localises to the cell inner membrane. Its function is as follows. F(1)F(0) ATP synthase produces ATP from ADP in the presence of a proton or sodium gradient. F-type ATPases consist of two structural domains, F(1) containing the extramembraneous catalytic core and F(0) containing the membrane proton channel, linked together by a central stalk and a peripheral stalk. During catalysis, ATP synthesis in the catalytic domain of F(1) is coupled via a rotary mechanism of the central stalk subunits to proton translocation. Component of the F(0) channel, it forms part of the peripheral stalk, linking F(1) to F(0). The b'-subunit is a diverged and duplicated form of b found in plants and photosynthetic bacteria. The sequence is that of ATP synthase subunit b 2 (atpF2) from Rhizobium johnstonii (strain DSM 114642 / LMG 32736 / 3841) (Rhizobium leguminosarum bv. viciae).